The following is a 138-amino-acid chain: Isochorismatase-like protein asqB (138 aa).

Belongs to the isochorismatase family.

The enzyme catalyses [(1'E)-5'-(3',3'-dimethyloxiran-2'-yl)-3'-hydroxy-3'-methylpent-1'-en-1'-yl]-quinolinone B = yaequinolone C. It functions in the pathway secondary metabolite biosynthesis. It participates in alkaloid biosynthesis. The protein operates within mycotoxin biosynthesis. In terms of biological role, isochorismatase-like protein; part of the gene cluster that mediates the biosynthesis of the aspoquinolone mycotoxins. Within the pathway, asqB converts [(1'E)-5'-(3',3'-dimethyloxiran-2'-yl)-3'-hydroxy-3'-methylpent-1'-en-1'-yl]-quinolinone B into yaequinolone C. The first step of the pathway is catalyzed by the nonribosomal peptide synthetase asqK that condenses anthranilic acid and O-methyl-L-tyrosine to produce 4'-methoxycyclopeptin. 4'-methoxycyclopeptin is then converted to 4'-methoxydehydrocyclopeptin by the ketoglutarate-dependent dioxygenase asqJ. AsqJ also converts its first product 4'-methoxydehydrocyclopeptin to 4'-methoxycyclopenin. The following conversion of 4'-methoxycyclopenin into 4'-methoxyviridicatin is catalyzed by the cyclopenase asqI. 4'-methoxyviridicatin is the precursor of quinolone natural products, and is further converted to quinolinone B. The prenyltransferase asqH1 then catalyzes the canonical Friedel-Crafts alkylation of quinolinone B with dimethylallyl cation to yield dimethylallyl quinolone, which is subjected to FAD-dependent dehydrogenation by the FAD-linked oxidoreductase asqF to yield conjugated aryl diene. The delta(3') double bond then serves as the site of the second alkylation with DMAPP catalyzed by the prenyltransferase asqH2 to yield a carbenium ion intermediate, which can be attacked by H(2)O to yield a styrenyl quinolone containing a C3'-hydroxyprenyl chain. The FAD-dependent monooxygenase asqG performs epoxidation of the terminal C7'-C8' olefin. Finally, after dehydratation of the epoxide at C3 by asqC, the quinolone epoxide rearrangement protein asqO catalyzes an enzymatic 3-exo-tet cyclization to yield the cyclopropyl-THF ring system in aspoquinolone. This chain is Isochorismatase-like protein asqB, found in Emericella nidulans (strain FGSC A4 / ATCC 38163 / CBS 112.46 / NRRL 194 / M139) (Aspergillus nidulans).